The chain runs to 822 residues: Pentatricopeptide repeat-containing protein At2g41720 (822 aa).

The interval 1–28 (MATVTNFKLVTPPESSRADKPGATKASD) is disordered. PPR repeat units lie at residues 106–136 (ARKN…MKIQ), 142–176 (RNDI…SCKP), 177–211 (DAET…AIAP), 212–246 (SRST…GVGP), 247–281 (DLVT…KVRP), 282–316 (DTTT…RAEC), 319–353 (DVVT…GLKP), 354–388 (NIVS…GIIP), 389–423 (DVVS…RRKP), 424–458 (NVVT…GIKP), 459–493 (NVVS…GINL), 494–528 (NTAA…KVKA), 529–563 (DSVT…SIPL), 564–598 (TKEV…GCEP), 599–633 (DVIA…GIEP), 634–668 (DSIA…EIPF), 669–699 (TGAV…MDPY), 704–738 (SIGL…GVGI), and 739–773 (NLKT…GIQP).

The protein belongs to the PPR family. P subfamily.

In Arabidopsis thaliana (Mouse-ear cress), this protein is Pentatricopeptide repeat-containing protein At2g41720 (EMB2654).